A 381-amino-acid polypeptide reads, in one-letter code: Alkanesulfonate monooxygenase (381 aa).

It belongs to the SsuD family. Homotetramer.

The catalysed reaction is an alkanesulfonate + FMNH2 + O2 = an aldehyde + FMN + sulfite + H2O + 2 H(+). In terms of biological role, catalyzes the desulfonation of aliphatic sulfonates. In Escherichia coli O7:K1 (strain IAI39 / ExPEC), this protein is Alkanesulfonate monooxygenase.